The sequence spans 109 residues: Elongin-C (109 aa).

It belongs to the SKP1 family.

It is found in the nucleus. In terms of biological role, SIII, also known as elongin, is a general transcription elongation factor that increases the RNA polymerase II transcription elongation past template-encoded arresting sites. Subunit A is transcriptionally active and its transcription activity is strongly enhanced by binding to the dimeric complex of the SIII regulatory subunits B and C (elongin BC complex). Its function is as follows. The elongin BC complex seems to be involved as an adapter protein in the proteasomal degradation of target proteins via different E3 ubiquitin ligase complexes. This Dictyostelium discoideum (Social amoeba) protein is Elongin-C (tceb1).